The chain runs to 363 residues: Phosphoserine aminotransferase (363 aa).

Position 42 (R42) interacts with L-glutamate. Residues 76–77 (GR), W102, T156, D175, and Q198 contribute to the pyridoxal 5'-phosphate site. K199 is subject to N6-(pyridoxal phosphate)lysine. A pyridoxal 5'-phosphate-binding site is contributed by 240-241 (NT).

This sequence belongs to the class-V pyridoxal-phosphate-dependent aminotransferase family. SerC subfamily. Homodimer. The cofactor is pyridoxal 5'-phosphate.

The protein localises to the cytoplasm. It catalyses the reaction O-phospho-L-serine + 2-oxoglutarate = 3-phosphooxypyruvate + L-glutamate. It carries out the reaction 4-(phosphooxy)-L-threonine + 2-oxoglutarate = (R)-3-hydroxy-2-oxo-4-phosphooxybutanoate + L-glutamate. It functions in the pathway amino-acid biosynthesis; L-serine biosynthesis; L-serine from 3-phospho-D-glycerate: step 2/3. Its pathway is cofactor biosynthesis; pyridoxine 5'-phosphate biosynthesis; pyridoxine 5'-phosphate from D-erythrose 4-phosphate: step 3/5. Its function is as follows. Catalyzes the reversible conversion of 3-phosphohydroxypyruvate to phosphoserine and of 3-hydroxy-2-oxo-4-phosphonooxybutanoate to phosphohydroxythreonine. The chain is Phosphoserine aminotransferase from Shewanella sp. (strain ANA-3).